We begin with the raw amino-acid sequence, 196 residues long: ATP-dependent Clp protease proteolytic subunit (196 aa).

Serine 101 acts as the Nucleophile in catalysis. Residue histidine 126 is part of the active site.

Belongs to the peptidase S14 family. Component of the chloroplastic Clp protease core complex.

The protein resides in the plastid. Its subcellular location is the chloroplast stroma. It carries out the reaction Hydrolysis of proteins to small peptides in the presence of ATP and magnesium. alpha-casein is the usual test substrate. In the absence of ATP, only oligopeptides shorter than five residues are hydrolyzed (such as succinyl-Leu-Tyr-|-NHMec, and Leu-Tyr-Leu-|-Tyr-Trp, in which cleavage of the -Tyr-|-Leu- and -Tyr-|-Trp bonds also occurs).. Its function is as follows. Cleaves peptides in various proteins in a process that requires ATP hydrolysis. Has a chymotrypsin-like activity. Plays a major role in the degradation of misfolded proteins. This is ATP-dependent Clp protease proteolytic subunit from Lotus japonicus (Lotus corniculatus var. japonicus).